The sequence spans 204 residues: Ribosomal RNA small subunit methyltransferase G (204 aa).

The S-adenosyl-L-methionine site is built by Gly73, Phe78, and Arg139.

This sequence belongs to the methyltransferase superfamily. RNA methyltransferase RsmG family.

The protein localises to the cytoplasm. It carries out the reaction guanosine(527) in 16S rRNA + S-adenosyl-L-methionine = N(7)-methylguanosine(527) in 16S rRNA + S-adenosyl-L-homocysteine. Its function is as follows. Specifically methylates the N7 position of guanine in position 527 of 16S rRNA. The protein is Ribosomal RNA small subunit methyltransferase G of Coxiella burnetii (strain Dugway 5J108-111).